Reading from the N-terminus, the 983-residue chain is UPF0182 protein KRH_08700 (983 aa).

7 helical membrane-spanning segments follow: residues 22-42, 67-87, 116-136, 172-192, 213-233, 261-281, and 288-308; these read GALL…VGFT, VIGL…LSLW, VVMV…VATQ, LLIG…LLMH, VHLG…FWLD, GILA…GFIG, and IGAA…PWAI. A disordered region spans residues 893 to 959; that stretch reads GAKTDTGAGV…DKAMKDGDWT (67 aa). Basic and acidic residues predominate over residues 947–959; the sequence is QDSDKAMKDGDWT.

It belongs to the UPF0182 family.

The protein resides in the cell membrane. This Kocuria rhizophila (strain ATCC 9341 / DSM 348 / NBRC 103217 / DC2201) protein is UPF0182 protein KRH_08700.